The sequence spans 239 residues: L-cystine transport system permease protein TcyL (239 aa).

Residues 21–216 (LPVTLYILTL…AVAVLFEWFF (196 aa)) enclose the ABC transmembrane type-1 domain. The next 4 membrane-spanning stretches (helical) occupy residues 25–45 (LYIL…LALP), 69–89 (IMVQ…LIGI), 96–116 (PFYA…AEII), and 196–216 (EVYI…EWFF).

Belongs to the binding-protein-dependent transport system permease family. In terms of assembly, the complex is composed of two ATP-binding proteins (TcyN), two transmembrane proteins (TcyL and TcyM) and two solute-binding proteins (TcyJ and TcyK).

It is found in the cell membrane. Part of the ABC transporter complex TcyJKLMN involved in L-cystine import. Probably responsible for the translocation of the substrate across the membrane. Is also involved in cystathionine, djenkolate, and S-methylcysteine transport. The polypeptide is L-cystine transport system permease protein TcyL (tcyL) (Bacillus subtilis (strain 168)).